The sequence spans 132 residues: MAEVLKLTILTPDREFYKGEVLEVITDSIQGNITILPGHMPLITTLKSTDTRIVEKSGKELKAFTSNGILEIKNNELKILCDVCEWPGEIDLKRAEEAKKRAEQRLAHKDGIDVKRAQLALNRALARINLLK.

The protein belongs to the ATPase epsilon chain family. F-type ATPases have 2 components, CF(1) - the catalytic core - and CF(0) - the membrane proton channel. CF(1) has five subunits: alpha(3), beta(3), gamma(1), delta(1), epsilon(1). CF(0) has three main subunits: a, b and c.

It localises to the cell membrane. Its function is as follows. Produces ATP from ADP in the presence of a proton gradient across the membrane. This is ATP synthase epsilon chain from Clostridium kluyveri (strain NBRC 12016).